The chain runs to 565 residues: Perivitellin-2 67 kDa subunit (565 aa).

An N-terminal signal peptide occupies residues 1-26 (MSQLRWWVVSQLLLLIVVCILDHSEG). The region spanning 27–340 (ARVCPKIVPG…AKVANLDRLT (314 aa)) is the MACPF domain.

As to quaternary structure, perivitellin-2 is a heterooctamer of 4 identical 98 kDa heterodimers, each composed of one 31 kDa and one 67 kDa subunits. The 98 kDa heterodimer subunits are held together by disulfide bridges while the heterodimers are assembled into the native perivitellin-2 octamer by non-covalent forces. Post-translationally, glycosylated. Contains four O-linked and one N-linked oligosaccharide bonds. The protein contains 2.5% of carbohydrates (high levels of mannose, galactose, and NAcGlucosamine, and small amounts of NacGalactosamine). In terms of processing, PV2 is a very high density lipoprotein (VHDL). It contains 3.75% of lipids. The major lipid classes are free sterols and phospholipids and also have significant quantities of energy-providing triacylglycerides and free fatty acids. Produced by albumen secretory cells. Found in developing eggs.

It localises to the secreted. It is found in the target cell membrane. In terms of biological role, the egg defensive protein perivitellin-2 is a pore-forming two-subunit glycoprotein that affects both the nervous and digestive systems of mammals. In addition, it is a source of both structural and energetic molecules during embryonic development. The tachylectin subunit (31 kDa) binds target membranes while the MACPF subunit (67 kDa) disrupts lipid bilayers forming large pores altering the plasma membrance conductance. Both in vivo and in vitro, the protein shows wide pH range stability and is resistant to enzymatic proteolysis from gastrointestinal environments. It specifically binds mature enterocytes but does not cause cell disruption on caco-2 (human colorectal adenocarcinoma cells) or rat intestinal cells. After oral administration to mice, it binds enterocytes and induces large dose-dependent morphological changes on their small intestine mucosa, reducing the absorptive surface. Additionally, it is detected in the Peyer's patches where it activates lymphoid follicles and triggers apoptosis. The toxin can also traverse the intestinal barrier and induce oral adaptive immunity with evidence of circulating antibody response. The toxin also shows hemagglutination properties thanks to the tachylectin subunit, but does not show hemolytic activity. In addition to enterotoxin activity, the toxin also acts as a neurotoxin, since an intraperitoneal injection induces paralysis of the mice rear limbs, followed by death. The sequence is that of Perivitellin-2 67 kDa subunit from Pomacea canaliculata (Golden apple snail).